A 766-amino-acid chain; its full sequence is Subtilisin-like protease SBT4.15 (766 aa).

An N-terminal signal peptide occupies residues 1–23; that stretch reads MVSNQRVRLFMLCFCLVNNAVIA. Residues 24–113 constitute a propeptide, activation peptide; sequence ATEDENVERK…VFKNTQRQLH (90 aa). In terms of domain architecture, Inhibitor I9 spans 35 to 113; that stretch reads YIVYMGEATE…VFKNTQRQLH (79 aa). In terms of domain architecture, Peptidase S8 spans 117-601; it reads SWDFLGLVES…SGQINPRRAI (485 aa). Asp-144 acts as the Charge relay system in catalysis. N-linked (GlcNAc...) asparagine glycosylation occurs at Asn-175. His-210 acts as the Charge relay system in catalysis. Residues Asn-233, Asn-376, and Asn-465 are each glycosylated (N-linked (GlcNAc...) asparagine). Residues 365-460 enclose the PA domain; the sequence is MYPLTSGSLA…YVFFEDGTKI (96 aa). Ser-543 (charge relay system) is an active-site residue. Residues Asn-624, Asn-638, and Asn-668 are each glycosylated (N-linked (GlcNAc...) asparagine).

Belongs to the peptidase S8 family. The C-terminal propeptide is autocleaved.

It is found in the secreted. The sequence is that of Subtilisin-like protease SBT4.15 from Arabidopsis thaliana (Mouse-ear cress).